Consider the following 1658-residue polypeptide: Silent chromatin protein ESC1 (1658 aa).

The span at Asp-36–Arg-54 shows a compositional bias: basic and acidic residues. Disordered stretches follow at residues Asp-36–Ile-76 and Thr-156–Glu-499. 2 stretches are compositionally biased toward acidic residues: residues Leu-205–Glu-214 and Ser-245–Gly-254. Residues Gly-262–Ser-286 are compositionally biased toward polar residues. The segment covering Val-289–Lys-305 has biased composition (acidic residues). Over residues Val-335 to Glu-352 the composition is skewed to basic and acidic residues. Residues Val-365–Gln-375 show a composition bias toward acidic residues. Residues Val-386–Lys-397 are compositionally biased toward basic and acidic residues. Over residues Glu-398 to Asp-407 the composition is skewed to acidic residues. The span at Ser-408–Glu-417 shows a compositional bias: low complexity. 3 stretches are compositionally biased toward basic and acidic residues: residues Glu-425 to Ser-435, Ser-442 to Gln-461, and Asp-471 to Phe-482. Thr-500 is subject to Phosphothreonine. Ser-532 is subject to Phosphoserine. 2 disordered regions span residues Ser-550–Glu-584 and Leu-589–Ser-608. The span at Gly-568–Gly-577 shows a compositional bias: polar residues. Phosphoserine is present on residues Ser-579, Ser-583, Ser-608, and Ser-662. Disordered regions lie at residues Ser-770–Thr-819, Glu-863–Thr-964, and Glu-1082–Lys-1115. Polar residues predominate over residues Gln-800–Asp-812. 2 positions are modified to phosphoserine: Ser-865 and Ser-866. The segment covering Glu-869–Ser-878 has biased composition (basic and acidic residues). The segment covering Lys-879 to Lys-905 has biased composition (polar residues). Phosphoserine is present on residues Ser-888 and Ser-911. Basic and acidic residues predominate over residues Ser-918–Lys-931. Positions Leu-932 to Ser-956 are enriched in acidic residues. Phosphoserine is present on residues Ser-937, Ser-1092, Ser-1096, Ser-1098, Ser-1166, Ser-1176, and Ser-1178. A compositionally biased stretch (polar residues) spans Glu-1082 to Ser-1096. Residues Asp-1097–Lys-1115 show a composition bias toward basic and acidic residues. The segment covering Ser-1197–Val-1207 has biased composition (polar residues). A disordered region spans residues Ser-1197 to Glu-1216. A phosphoserine mark is found at Ser-1214 and Ser-1254. A compositionally biased stretch (basic and acidic residues) spans Val-1261–Glu-1272. The segment at Val-1261 to Asp-1315 is disordered. Phosphoserine is present on residues Ser-1290, Ser-1326, and Ser-1332. Disordered regions lie at residues Arg-1334 to Glu-1482 and Pro-1503 to Lys-1658. Residues Leu-1335–Asn-1366 are compositionally biased toward basic and acidic residues. Ser-1403, Ser-1409, Ser-1450, and Ser-1454 each carry phosphoserine. Acidic residues predominate over residues Leu-1407–Gly-1423. Residues Tyr-1463–Thr-1479 are compositionally biased toward polar residues. Over residues Leu-1507–Asp-1537 the composition is skewed to basic and acidic residues. Residue Ser-1539 is modified to Phosphoserine. Basic and acidic residues-rich tracts occupy residues Pro-1550–Lys-1564 and Val-1575–Ser-1591. Phosphoserine is present on residues Ser-1590 and Ser-1591. Positions Thr-1607–Lys-1626 are enriched in basic residues. Residues Arg-1648 to Lys-1658 are compositionally biased toward polar residues.

Interacts with SIR4.

It is found in the nucleus. Involved in the clustering of telomeres at the nuclear periphery, forming discrete subcompartments that accumulate a complex of histone-binding silencing factors like SIR4. Required for SIR4-mediated anchoring and partitioning of plasmids. The polypeptide is Silent chromatin protein ESC1 (ESC1) (Saccharomyces cerevisiae (strain ATCC 204508 / S288c) (Baker's yeast)).